The following is a 316-amino-acid chain: Adenine deaminase (316 aa).

Zn(2+) contacts are provided by His14, His16, and His194. Glu197 functions as the Proton donor in the catalytic mechanism. Asp275 contributes to the Zn(2+) binding site. Position 276 (Asp276) interacts with substrate.

Belongs to the metallo-dependent hydrolases superfamily. Adenosine and AMP deaminases family. Adenine deaminase type 2 subfamily. Requires Zn(2+) as cofactor.

The enzyme catalyses adenine + H2O + H(+) = hypoxanthine + NH4(+). In terms of biological role, catalyzes the hydrolytic deamination of adenine to hypoxanthine. Plays an important role in the purine salvage pathway and in nitrogen catabolism. The polypeptide is Adenine deaminase (Bordetella avium (strain 197N)).